The chain runs to 544 residues: WD repeat-containing protein 25 (544 aa).

Disordered regions lie at residues 17–74 (DSDS…EDPG) and 183–208 (QRQALSTETGKGKDVEPQGPPAGRAP). Residues 30–39 (FNATGQQKDT) show a composition bias toward polar residues. 7 WD repeats span residues 244 to 286 (GHRG…HCLQ), 290 to 329 (LHTEAVRAARWAPCGRRILSGGFDFALHLTDLETGTQLFS), 330 to 373 (GRSD…RSYK), 375 to 420 (TIQQ…KISN), 424 to 463 (HERFTCPSLALHPREPVFLAQTNGNYLALFSTVWPYRMSR), 469 to 510 (GHKV…RACT), and 513 to 544 (GHTQACVGTTYHPVLPSVLATCSWGGDMKIWH).

Expressed in heart, muscle, testis, ovary, uterus and prostate.

This chain is WD repeat-containing protein 25, found in Homo sapiens (Human).